The chain runs to 83 residues: Putative defensin-like protein 150 (83 aa).

Positions 1 to 25 (MMGKHIQLSFAILIMFTIFVLGAVG) are cleaved as a signal peptide. Intrachain disulfides connect Cys35–Cys83, Cys44–Cys64, Cys49–Cys77, and Cys53–Cys79.

This sequence belongs to the DEFL family.

The protein resides in the secreted. The sequence is that of Putative defensin-like protein 150 (LCR32) from Arabidopsis thaliana (Mouse-ear cress).